A 65-amino-acid chain; its full sequence is Alpha-toxin Bs-Tx28 (65 aa).

An LCN-type CS-alpha/beta domain is found at 3–65; the sequence is RDAYIADDKN…VPIRIPGKCR (63 aa). Intrachain disulfides connect Cys-13–Cys-64, Cys-17–Cys-37, Cys-23–Cys-47, and Cys-27–Cys-49. Arginine amide is present on Arg-65.

Belongs to the long (4 C-C) scorpion toxin superfamily. Sodium channel inhibitor family. Alpha subfamily. Expressed by the venom gland.

It is found in the secreted. Functionally, alpha toxins bind voltage-independently at site-3 of sodium channels (Nav) and inhibit the inactivation of the activated channels, thereby blocking neuronal transmission. This toxin inhibits the inactivation of activated TTX-sensitive sodium channels (Nav). The protein is Alpha-toxin Bs-Tx28 of Hottentotta tamulus sindicus (Scorpion).